The chain runs to 647 residues: Threonine--tRNA ligase (647 aa).

In terms of domain architecture, TGS spans 1 to 61; sequence MIKITFPDGA…EEDGSIEIVT (61 aa). A catalytic region spans residues 240–538; sequence DHRKLGKELD…LIETYKGAFP (299 aa). Positions 334, 385, and 515 each coordinate Zn(2+).

Belongs to the class-II aminoacyl-tRNA synthetase family. In terms of assembly, homodimer. Zn(2+) serves as cofactor.

Its subcellular location is the cytoplasm. It catalyses the reaction tRNA(Thr) + L-threonine + ATP = L-threonyl-tRNA(Thr) + AMP + diphosphate + H(+). Catalyzes the attachment of threonine to tRNA(Thr) in a two-step reaction: L-threonine is first activated by ATP to form Thr-AMP and then transferred to the acceptor end of tRNA(Thr). Also edits incorrectly charged L-seryl-tRNA(Thr). This Streptococcus pyogenes serotype M49 (strain NZ131) protein is Threonine--tRNA ligase.